A 197-amino-acid chain; its full sequence is Pre-mRNA-splicing factor SNT309 (197 aa).

In terms of assembly, associated with the spliceosome.

Its subcellular location is the nucleus. In terms of biological role, involved in pre-mRNA splicing. This chain is Pre-mRNA-splicing factor SNT309 (SNT309), found in Eremothecium gossypii (strain ATCC 10895 / CBS 109.51 / FGSC 9923 / NRRL Y-1056) (Yeast).